The sequence spans 311 residues: N-acetylmuramic acid 6-phosphate etherase (311 aa).

An SIS domain is found at Val66–Lys229. Glu94 functions as the Proton donor in the catalytic mechanism. Glu125 is an active-site residue.

Belongs to the GCKR-like family. MurNAc-6-P etherase subfamily. Homodimer.

It carries out the reaction N-acetyl-D-muramate 6-phosphate + H2O = N-acetyl-D-glucosamine 6-phosphate + (R)-lactate. It functions in the pathway amino-sugar metabolism; N-acetylmuramate degradation. Its function is as follows. Specifically catalyzes the cleavage of the D-lactyl ether substituent of MurNAc 6-phosphate, producing GlcNAc 6-phosphate and D-lactate. The sequence is that of N-acetylmuramic acid 6-phosphate etherase from Streptomyces coelicolor (strain ATCC BAA-471 / A3(2) / M145).